The sequence spans 1406 residues: Inactive tyrosine-protein kinase PRAG1 (1406 aa).

Ser-148 carries the post-translational modification Phosphoserine. Basic and acidic residues predominate over residues 184-193 (EEKAVHKEKP). 2 disordered regions span residues 184–205 (EEKAVHKEKPSFPYQDRPSTQE) and 217–248 (TTSGCHQGPGPLRESLPSEDDSDQRCSPSGDS). A phosphotyrosine mark is found at Tyr-253, Tyr-365, and Tyr-413. Disordered stretches follow at residues 372–470 (PAPE…TPQV) and 484–854 (DHRT…HSET). The span at 526–542 (RESHAHSASESKPKERP) shows a compositional bias: basic and acidic residues. Residues 546–576 (PKLSKSSPVGSPVSPSAGGPPVSPLADLSDG) show a composition bias toward low complexity. 2 stretches are compositionally biased toward polar residues: residues 660 to 671 (NGPTDHSNSTTW) and 678 to 695 (DGSSGQNSKVGTGMSKSA). Phosphoserine occurs at positions 696 and 745. Composition is skewed to polar residues over residues 737 to 746 (SQGSAESLSP) and 754 to 770 (SFTTGSTDSLASDSRTC). The residue at position 782 (Ser-782) is a Phosphoserine. The span at 798–808 (SGSTEDVSPSG) shows a compositional bias: polar residues. Ser-826 carries the post-translational modification Phosphoserine. A required for homodimerization region spans residues 933–976 (STQLQLHGLLSNISSKEGTYAKLGGLYTQSLARLVAKCEDLFMG). The region spanning 978-1329 (QKKELHFNEN…EAKRVLQCLL (352 aa)) is the Protein kinase domain. Over residues 1163 to 1173 (GPAPAPAPAPA) the composition is skewed to pro residues. The tract at residues 1163–1206 (GPAPAPAPAPAPAAAAPPCSSAAPPAGGTLSPAAGPASPEGPRE) is disordered. Residues 1174–1202 (PAAAAPPCSSAAPPAGGTLSPAAGPASPE) are compositionally biased toward low complexity. The tract at residues 1331–1406 (GPRRELVQQP…LQSLKLLQLL (76 aa)) is required for homodimerization.

The protein belongs to the protein kinase superfamily. As to quaternary structure, homodimer. Dimerization leads to the catalytic activation of CSK. Interacts (via C-terminus) with RND2. Interacts with CSK (via SH2 domain) in a Tyr-413 phosphorylation-dependent manner; this interaction potentiates kinase activity of CSK. Interacts with PEAK1. Interacts with NOTCH1 intracellular domain (N1ICD). Forms a complex with N1ICD and MAML1, in a MAML1-dependent manner. Phosphorylated by CSK on Tyr-253, Tyr-365, and Tyr-413; Tyr-413 is a primary site of phosphorylation.

Its subcellular location is the cytoplasm. It localises to the cell junction. The protein resides in the focal adhesion. The protein localises to the nucleus. Its function is as follows. Catalytically inactive protein kinase that acts as a scaffold protein. Functions as an effector of the small GTPase RND2, which stimulates RhoA activity and inhibits NGF-induced neurite outgrowth. Promotes Src family kinase (SFK) signaling by regulating the subcellular localization of CSK, a negative regulator of these kinases, leading to the regulation of cell morphology and motility by a CSK-dependent mechanism. Acts as a critical coactivator of Notch signaling. The sequence is that of Inactive tyrosine-protein kinase PRAG1 from Homo sapiens (Human).